The following is a 2444-amino-acid chain: MAADIEQVFRSFVVSKFREIQQELSSGRSEGQLNGETNPPIEGNQAGDTAASARSLPNEEIVQKIEEVLSGVLDTELRYKPDLKEASRKSRCVSVQTDPTDEVPTKKSKKHKKHKNKKKKKKKEKEKKYKRQPEESESKLKSHHDGNLESDSFLKFDSEPSAAALEHPVRAFGLSEASETALVLEPPVVSMEVQESHVLETLKPATKAAELSVVSTSVISEQSEQPMPGMLEPSMTKILDSFTAAPVPMSTAALKSPEPVVTMSVEYQKSVLKSLETMPPETSKTTLVELPIAKVVEPSETLTIVSETPTEVHPEPSPSTMDFPESSTTDVQRLPEQPVEAPSEIADSSMTRPQESLELPKTTAVELQESTVASALELPGPPATSILELQGPPVTPVPELPGPSATPVPELSGPLSTPVPELPGPPATVVPELPGPSVTPVPQLSQELPGPPAPSMGLEPPQEVPEPPVMAQELSGVPAVSAAIELTGQPAVTVAMELTEQPVTTTEFEQPVAMTTVEHPGHPEVTTATGLLGQPEAAMVLELPGQPVATTALELSGQPSVTGVPELSGLPSATRALELSGQSVATGALELPGQLMATGALEFSGQSGAAGALELLGQPLATGVLELPGQPGAPELPGQPVATVALEISVQSVVTTSELSTMTVSQSLEVPSTTALESYNTVAQELPTTLVGETSVTVGVDPLMAQESHMLASNTMETHMLASNTMDSQMLASNTMDSQMLASNTMDSQMLASSTMDSQMLASSTMDSQMLATSTMDSQMLATSSMDSQMLATSSMDSQMLATSSMDSQMLATSSMDSQMLATSSMDSQMLATSSMDSQMLATSSMDSQMLATSSMDSQMLASGAMDSQMLASGTMDAQMLASGTMDAQMLASSTQDSAMMGSKSPDPYRLAQDPYRLAQDPYRLGHDPYRLGHDAYRLGQDPYRLGHDPYRLTPDPYRVSPRPYRIAPRSYRIAPRPYRLAPRPLMLASRRSMMMSYAAERSMMSSYERSMMSYERSMMSPMAERSMMSAYERSMMSAYERSMMSPMAERSMMSAYERSMMSAYERSMMSPMADRSMMSMGADRSMMSSYSAADRSMMSSYSAADRSMMSSYTDRSMMSMAADSYTDSYTDSYTEAYMVPPLPPEEPPTMPPLPPEEPPMTPPLPPEEPPEGPALSTEQSALTADNTWSTEVTLSTGESLSQPEPPVSQSEISEPMAVPANYSMSESETSMLASEAVMTVPEPAREPESSVTSAPVESAVVAEHEMVPERPMTYMVSETTMSVEPAVLTSEASVISETSETYDSMRPSGHAISEVTMSLLEPAVTISQPAENSLELPSMTVPAPSTMTTTESPVVAVTEIPPVAVPEPPIMAVPELPTMAVVKTPAVAVPEPLVAAPEPPTMATPELCSLSVSEPPVAVSELPALADPEHAITAVSGVSSLEPSVPILEPAVSVLQPVMIVSEPSVPVQEPTVAVSEPAVIVSEHTQITSPEMAVESSPVIVDSSVMSSQIMKGMNLLGGDENLGPEVGMQETLLHPGEEPRDGGHLKSDLYENEYDRNADLTVNSHLIVKDAEHNTVCATTVGPVGEASEEKILPISETKEITELATCAAVSEADIGRSLSSQLALELDTVGTSKGFEFVTASALISESKYDVEVSVTTQDTEHDMVISTSPSGGSEADIEGPLPAKDIHLDLPSTNFVCKDVEDSLPIKESAQAVAVALSPKESSEDTEVPLPNKEIVPESGYSASIDEINEADLVRPLLPKDMERLTSLRAGIEGPLLASEVERDKSAASPVVISIPERASESSSEEKDDYEIFVKVKDTHEKSKKNKNRDKGEKEKKRDSSLRSRSKRSKSSEHKSRKRTSESRSRARKRSSKSKSHRSQTRSRSRSRRRRRSSRSRSKSRGRRSVSKEKRKRSPKHRSKSRERKRKRSSSRDNRKAARARSRTPSRRSRSHTPSRRRRSRSVGRRRSFSISPSRRSRTPSRRSRTPSRRSRTPSRRSRTPSRRSRTPSRRRRSRSAVRRRSFSISPVRLRRSRTPLRRRFSRSPIRRKRSRSSERGRSPKRLTDLDKAQLLEIAKANAAAMCAKAGVPLPPNLKPAPPPTIEEKVAKKSGGATIEELTEKCKQIAQSKEDDDVIVNKPHVSDEEEEEPPFYHHPFKLSEPKPIFFNLNIAAAKPTPPKSQVTLTKEFPVSSGSQHRKKEADSVYGEWVPVEKNGEESKDDDNVFSSSLPSEPVDISTAMSERALAQKRLSENAFDLEAMSMLNRAQERIDAWAQLNSIPGQFTGSTGVQVLTQEQLANTGAQAWIKKDQFLRAAPVTGGMGAVLMRKMGWREGEGLGKNKEGNKEPILVDFKTDRKGLVAVGERAQKRSGNFSAAMKDLSGKHPVSALMEICNKRRWQPPEFLLVHDSGPDHRKHFLFRVLRNGSPYQPNCMFFLNRY.

Ala-2 bears the N-acetylalanine mark. Lys-16 bears the N6-acetyllysine mark. Over residues 23–37 the composition is skewed to polar residues; it reads ELSSGRSEGQLNGET. The segment at 23–58 is disordered; that stretch reads ELSSGRSEGQLNGETNPPIEGNQAGDTAASARSLPN. Residue Lys-64 forms a Glycyl lysine isopeptide (Lys-Gly) (interchain with G-Cter in SUMO2) linkage. A compositionally biased stretch (basic and acidic residues) spans 79 to 88; sequence YKPDLKEASR. The disordered stretch occupies residues 79-155; it reads YKPDLKEASR…GNLESDSFLK (77 aa). Ser-94 is subject to Phosphoserine. Residues 106-130 are compositionally biased toward basic residues; sequence KKSKKHKKHKNKKKKKKKEKEKKYK. Residues 131–155 show a composition bias toward basic and acidic residues; that stretch reads RQPEESESKLKSHHDGNLESDSFLK. Residues Ser-142, Ser-150, Ser-152, and Ser-158 each carry the phosphoserine modification. Lys-284 is subject to N6-acetyllysine. Disordered stretches follow at residues 301–358 and 391–468; these read TLTI…ESLE and GPPV…PEPP. 2 stretches are compositionally biased toward pro residues: residues 393 to 406 and 420 to 439; these read PVTP…PSAT and PELP…PSVT. At Thr-395 the chain carries Phosphothreonine. Residues 721–850 form a 13 X 10 AA tandem repeats of L-A-[ST]-[NSG]-[TS]-MDSQM region; the sequence is LASNTMDSQM…LATSSMDSQM (130 aa). The segment at 907–983 is 11 X 7 AA tandem repeats of [DR]-P-Y-R-[LI][AG][QHP]; it reads DPYRLAQDPY…IAPRPYRLAP (77 aa). Arg-945 is modified (omega-N-methylarginine). Position 954 is a phosphothreonine (Thr-954). At Ser-993 the chain carries Phosphoserine. 14 tandem repeats follow at residues 1001-1006, 1009-1014, 1016-1021, 1025-1030, 1033-1038, 1041-1046, 1050-1055, 1058-1063, 1066-1071, 1075-1080, 1084-1089, 1095-1100, 1106-1111, and 1115-1120. The interval 1001 to 1120 is 14 X 6 AA repeats of [ED]-R-S-M-M-S; that stretch reads ERSMMSSYER…SSYTDRSMMS (120 aa). An Asymmetric dimethylarginine modification is found at Arg-1002. Arg-1017 is modified (asymmetric dimethylarginine). Phosphoserine is present on residues Ser-1030 and Ser-1038. Ser-1055 and Ser-1063 each carry phosphoserine. At Ser-1077 the chain carries Phosphoserine. Over residues 1141–1168 the composition is skewed to pro residues; the sequence is PPLPPEEPPTMPPLPPEEPPMTPPLPPE. Residues 1141–1173 form a 3 X 11 AA tandem repats of P-P-L-P-P-E-E-P-P-[TME]-[MTG] region; it reads PPLPPEEPPTMPPLPPEEPPMTPPLPPEEPPEG. Residues 1141–1213 are disordered; sequence PPLPPEEPPT…PEPPVSQSEI (73 aa). Polar residues predominate over residues 1177–1213; that stretch reads STEQSALTADNTWSTEVTLSTGESLSQPEPPVSQSEI. 9 positions are modified to phosphoserine: Ser-1678, Ser-1723, Ser-1727, Ser-1772, Ser-1784, Ser-1791, Ser-1794, Ser-1807, and Ser-1808. The disordered stretch occupies residues 1802–2072; the sequence is ERASESSSEE…RSPKRLTDLD (271 aa). Basic and acidic residues-rich tracts occupy residues 1815 to 1826, 1834 to 1847, and 1855 to 1870; these read YEIFVKVKDTHE, RDKG…DSSL, and KSSE…ESRS. Composition is skewed to basic residues over residues 1871-1934 and 1942-1973; these read RARK…RKRS and AARA…RRRS. 7 consecutive repeat copies span residues 1950 to 1956, 1959 to 1977, 1978 to 1984, 1985 to 1991, 1992 to 1998, 1999 to 2005, and 2006 to 2012. The 7 X 7 AA repeats of P-S-R-R-S-R-[TS] stretch occupies residues 1950–2019; that stretch reads PSRRSRSHTP…SRTPSRRRRS (70 aa). Residues 1959–2030 are 2 X 19 AA repeats of P-S-R-R-R-R-S-R-S-V-V-R-R-R-S-F-S-I-S; sequence PSRRRRSRSV…SAVRRRSFSI (72 aa). 3 positions are modified to phosphoserine: Ser-1973, Ser-1975, and Ser-1977. Over residues 1980-2027 the composition is skewed to basic residues; sequence RRSRTPSRRSRTPSRRSRTPSRRSRTPSRRSRTPSRRRRSRSAVRRRS. One copy of the 2-7; approximate repeat lies at 2013 to 2019; the sequence is PSRRRRS. A 3-2; approximate repeat occupies 2020-2030; it reads RSAVRRRSFSI. Ser-2027, Ser-2029, Ser-2031, Ser-2047, and Ser-2049 each carry phosphoserine. The interval 2031 to 2057 is 3 X tandem repeats of [ST]-P-[VLI]-R-[RL]-[RK]-[RF]-S-R; it reads SPVRLRRSRTPLRRRFSRSPIRRKRSR. Positions 2034-2056 are enriched in basic residues; the sequence is RLRRSRTPLRRRFSRSPIRRKRS. Over residues 2057-2072 the composition is skewed to basic and acidic residues; that stretch reads RSSERGRSPKRLTDLD. At Lys-2073 the chain carries N6-acetyllysine; alternate. Lys-2073 is covalently cross-linked (Glycyl lysine isopeptide (Lys-Gly) (interchain with G-Cter in SUMO2); alternate). Lys-2110 is covalently cross-linked (Glycyl lysine isopeptide (Lys-Gly) (interchain with G-Cter in SUMO2)). A Phosphoserine modification is found at Ser-2147. A Glycyl lysine isopeptide (Lys-Gly) (interchain with G-Cter in SUMO2) cross-link involves residue Lys-2167. Position 2181 is a phosphothreonine (Thr-2181). The tract at residues 2192 to 2238 is disordered; sequence EFPVSSGSQHRKKEADSVYGEWVPVEKNGEESKDDDNVFSSSLPSEP. The residue at position 2256 (Ser-2256) is a Phosphoserine. The G-patch domain occupies 2323–2369; it reads TGGMGAVLMRKMGWREGEGLGKNKEGNKEPILVDFKTDRKGLVAVGE. Residues 2389-2444 form the DRBM domain; the sequence is HPVSALMEICNKRRWQPPEFLLVHDSGPDHRKHFLFRVLRNGSPYQPNCMFFLNRY.

As to quaternary structure, interacts with SRSF2. Associates with the spliceosome. Interacts with USH1G. As to expression, widely expressed. Highly expressed in brain, heart, spleen, liver, skeletal muscle, kidney and testis.

It localises to the nucleus speckle. RNA-binding protein that acts as a mRNA splicing cofactor by promoting efficient splicing of transcripts that possess weak splice sites. Specifically promotes splicing of many cell-cycle and DNA-repair transcripts that possess weak splice sites, such as TUBG1, KATNB1, TUBGCP2, AURKB, PCNT, AKT1, RAD23A, and FANCG. Probably acts by facilitating the interaction between Serine/arginine-rich proteins such as SRSF2 and the RNA polymerase II. Also binds to DNA; binds to the consensus DNA sequence: 5'-GA[GT]AN[CG][AG]CC-3'. Essential for correct RNA splicing of multiple genes critical for brain development, neuronal migration and metabolism, including TUBG1, FLNA, PNKP, WDR62, PSMD3, PCK2, PFKL, IDH2, and ACY1. May also regulate the ghrelin signaling in hypothalamic neuron by acting as a negative regulator of GHSR expression. This chain is Protein SON (Son), found in Mus musculus (Mouse).